We begin with the raw amino-acid sequence, 526 residues long: Rho guanine nucleotide exchange factor 3 (526 aa).

The interval glutamate 20–lysine 40 is disordered. A phosphoserine mark is found at serine 47 and serine 70. The DH domain occupies lysine 122 to lysine 304. A PH domain is found at isoleucine 291–glutamate 449. The segment at glutamate 464–valine 526 is disordered. The segment covering serine 466–arginine 475 has biased composition (polar residues).

In terms of assembly, interacts with RHOA and RHOB. As to expression, widely expressed. Highest levels are found in adult brain and skeletal muscle. Lower levels are found in heart and kidney.

The protein resides in the cytoplasm. In terms of biological role, acts as a guanine nucleotide exchange factor (GEF) for RhoA and RhoB GTPases. This is Rho guanine nucleotide exchange factor 3 (ARHGEF3) from Homo sapiens (Human).